The primary structure comprises 522 residues: Target of rapamycin complex 2 subunit MAPKAP1 (522 aa).

An N-acetylalanine modification is found at Ala-2. Positions 2-184 (AFLDNPTIIL…KKIDVYLPLH (183 aa)) are interaction with MAP3K2. An interaction with NBN region spans residues 2-267 (AFLDNPTIIL…GFSTLALVEK (266 aa)). The interval 38–59 (LEKTHPPSVPGDSGSEVQGSSG) is disordered. Thr-86 is modified (phosphothreonine). Residues Ser-128, Ser-186, Ser-315, and Ser-356 each carry the phosphoserine modification. Positions 139–267 (QSILSVRLEQ…GFSTLALVEK (129 aa)) constitute a CRIM domain. The segment at 279-353 (LFVRINAAHG…QNAWEFCLVR (75 aa)) is SIN1-type RBD. The SIN1-type PH domain occupies 382–487 (HYKSFKVSMI…IVLKVNYILE (106 aa)). Position 393 (Arg-393) interacts with a 1,2-diacyl-sn-glycero-3-phospho-(1D-myo-inositol-3,4,5-trisphosphate). A Phosphothreonine modification is found at Thr-398. Residues Lys-428 and Lys-464 each contribute to the a 1,2-diacyl-sn-glycero-3-phospho-(1D-myo-inositol-3,4,5-trisphosphate) site. The segment at 468 to 522 (FESDAATVSEIVLKVNYILESRASTARADYFAQKQRKLNRRTSFSFQKEKKSGQQ) is interaction with ATF2. Residue Ser-510 is modified to Phosphoserine.

Belongs to the SIN1 family. Component of the mechanistic target of rapamycin complex 2 (mTORC2), consisting in two heterotretramers composed of MTOR, MLST8, RICTOR and MAPKAP1/SIN1. The mTORC2 core complex associates with PRR5/PROTOR1 and/or PRR5L/PROTOR2. Contrary to mTORC1, mTORC2 does not bind to and is not sensitive to FKBP12-rapamycin. Interacts with MAP3K2. Interacts with ATF2. Interacts with MAPK8. Interacts with GTP-bound HRAS and KRAS; inhibiting their activity. Interacts with IFNAR2. In terms of processing, phosphorylation at Ser-128 by PKC promotes relocalization to the perinuclear region, where the mTORC2 complex specifically mediates phosphorylation of SGK1. Phosphorylated at Thr-86 by AKT1 or RPS6KB1 in the presence of growth factors; the effect of this phosphorylation is however unclear. According to two studies, phosphorylation at Thr-86 by AKT1 is part of a positive feedback loop that increases mTORC2 activation. According to another study, phosphorylation at Thr-86 and Thr-398 by RPS6KB1 promotes dissociation from the mTORC2 complex, leading to inhibit mTORC2 signaling.

It localises to the cell membrane. The protein resides in the endoplasmic reticulum membrane. It is found in the early endosome membrane. Its subcellular location is the late endosome membrane. The protein localises to the lysosome membrane. It localises to the golgi apparatus membrane. The protein resides in the mitochondrion outer membrane. It is found in the cytoplasm. Its subcellular location is the perinuclear region. The protein localises to the nucleus. With respect to regulation, phosphatidylinositol 3,4,5-trisphosphate (PI(3,4,5)P3) promotes MTOR activation by relieving MAPKAP1/SIN1-mediated inhibition of MTOR that takes place in absence of PI(3,4,5)P3. Component of the mechanistic target of rapamycin complex 2 (mTORC2), which transduces signals from growth factors to pathways involved in proliferation, cytoskeletal organization, lipogenesis and anabolic output. In response to growth factors, mTORC2 phosphorylates and activates AGC protein kinase family members, including AKT (AKT1, AKT2 and AKT3), PKC (PRKCA, PRKCB and PRKCE) and SGK1. In contrast to mTORC1, mTORC2 is nutrient-insensitive. Within the mTORC2 complex, MAPKAP1/SIN1 acts as a substrate adapter which recognizes and binds AGC protein kinase family members for phosphorylation by MTOR. mTORC2 plays a critical role in AKT1 activation by mediating phosphorylation of different sites depending on the context, such as 'Thr-450', 'Ser-473', 'Ser-477' or 'Thr-479', facilitating the phosphorylation of the activation loop of AKT1 on 'Thr-308' by PDPK1/PDK1 which is a prerequisite for full activation. mTORC2 catalyzes the phosphorylation of SGK1 at 'Ser-422' and of PRKCA on 'Ser-657'. The mTORC2 complex also phosphorylates various proteins involved in insulin signaling, such as FBXW8 and IGF2BP1. mTORC2 acts upstream of Rho GTPases to regulate the actin cytoskeleton, probably by activating one or more Rho-type guanine nucleotide exchange factors. mTORC2 promotes the serum-induced formation of stress-fibers or F-actin. MAPKAP1 inhibits MAP3K2 by preventing its dimerization and autophosphorylation. Inhibits HRAS and KRAS independently of mTORC2 complex. Enhances osmotic stress-induced phosphorylation of ATF2 and ATF2-mediated transcription. Involved in ciliogenesis, regulates cilia length through its interaction with CCDC28B independently of mTORC2 complex. The chain is Target of rapamycin complex 2 subunit MAPKAP1 from Rattus norvegicus (Rat).